A 238-amino-acid chain; its full sequence is Ribonuclease 3 (238 aa).

An RNase III domain is found at 10–139; that stretch reads FKQFQEQTGI…FIGALYLDQG (130 aa). Glu-52 is a Mg(2+) binding site. Residue Asp-56 is part of the active site. Mg(2+) contacts are provided by Asp-125 and Glu-128. Residue Glu-128 is part of the active site. One can recognise a DRBM domain in the interval 165 to 234; sequence DYKSQLQEFV…AQMALAKLKQ (70 aa).

Belongs to the ribonuclease III family. Homodimer. Mg(2+) is required as a cofactor.

It is found in the cytoplasm. It carries out the reaction Endonucleolytic cleavage to 5'-phosphomonoester.. Functionally, digests double-stranded RNA. Involved in the processing of primary rRNA transcript to yield the immediate precursors to the large and small rRNAs (23S and 16S). Processes some mRNAs, and tRNAs when they are encoded in the rRNA operon. Processes pre-crRNA and tracrRNA of type II CRISPR loci if present in the organism. The chain is Ribonuclease 3 from Anoxybacillus flavithermus (strain DSM 21510 / WK1).